A 75-amino-acid chain; its full sequence is uncharacterized protein (75 aa).

One can recognise a LysM domain in the interval 29 to 72; that stretch reads EVYHVESGDTLWTIAKSFEIPVQQLMNLNKLSSDRIYPGQIIKI.

This is an uncharacterized protein from Bacillus subtilis (strain 168).